The primary structure comprises 452 residues: Chaperone SurA (452 aa).

The N-terminal stretch at 1–28 is a signal peptide; it reads MKKTLRFAAVVSSLAASAALLVAAPAAA. PpiC domains lie at 186 to 288 and 302 to 400; these read QQDL…RLVD and IVQT…QVLN.

Its subcellular location is the periplasm. The enzyme catalyses [protein]-peptidylproline (omega=180) = [protein]-peptidylproline (omega=0). In terms of biological role, chaperone involved in the correct folding and assembly of outer membrane proteins. Recognizes specific patterns of aromatic residues and the orientation of their side chains, which are found more frequently in integral outer membrane proteins. May act in both early periplasmic and late outer membrane-associated steps of protein maturation. The protein is Chaperone SurA of Burkholderia orbicola (strain AU 1054).